A 564-amino-acid polypeptide reads, in one-letter code: Asparagine synthetase domain-containing protein CG17486 (564 aa).

Cys-2 functions as the Nucleophile in the catalytic mechanism. One can recognise a Glutamine amidotransferase type-2 domain in the interval 2–180 (CGIFCSVVNN…PLGLFRVKLN (179 aa)). The Asparagine synthetase domain maps to 280–541 (PFCRLCMQKL…GLRDVVFLKK (262 aa)).

This Drosophila melanogaster (Fruit fly) protein is Asparagine synthetase domain-containing protein CG17486.